The sequence spans 129 residues: Large ribosomal subunit protein uL22 (129 aa).

This sequence belongs to the universal ribosomal protein uL22 family. Part of the 50S ribosomal subunit.

In terms of biological role, this protein binds specifically to 23S rRNA; its binding is stimulated by other ribosomal proteins, e.g. L4, L17, and L20. It is important during the early stages of 50S assembly. It makes multiple contacts with different domains of the 23S rRNA in the assembled 50S subunit and ribosome. Functionally, the globular domain of the protein is located near the polypeptide exit tunnel on the outside of the subunit, while an extended beta-hairpin is found that lines the wall of the exit tunnel in the center of the 70S ribosome. The sequence is that of Large ribosomal subunit protein uL22 from Sinorhizobium medicae (strain WSM419) (Ensifer medicae).